The following is a 716-amino-acid chain: MSFDHLLTSSKRRELLQNLGIGHGSDVFSTGLFRKAECNAETAISQRSIPRANPDHLRPIFDRFATKEIKGKKLMTPEDFIRGYLGLYTEENYNKETVRLLASAADTTKDGDISFEEFCAFEALLCSPDALYLTAFELFDRNASDTISCDEFEAVIRHTQPLHDQDFDFSSEFIKRYFGADKQRNVNYHSFCQLLHDFYEEQGIQAFKRYDKNGNGTISSLDFQQIMTTVKGHLLTDFVRHNLIAVSGGGASGHKFSDTRGGFVTFPYYAAFNSLLAKMELIKRVYVSTTRGNLDIEMTKEEFLHAIQSYTQVTPYEVEILFHLSELNHPGRKTLCLKDIQAIDPERLKRVSQMDRLINIKAVHHKDDRGVGTAFLESAYRFLLGSVAGACGATAVYPIDLVKTRMQNQRTSGSFVGEVMYKNSLDCFKKVVKFEGLLGLYRGLLPQIVGVAPEKAIKLTMNDYMRDKFTKDGKIPLYGEIIAGGTGGMCQVVFTNPLEIVKIRLQTAGEVQQAGKKIGVFTVLKELGFLGLYKGSRACFLRDIPFSAIYFPAYAHAKLASADEDGMNSPGTLFASAFIAGVPAAGLVTPADVIKTRLQVAARAGQTTYNGVIDCARKLIKEEGPMSLWKGTAARVCRSSPQFAVTLLTYEVLQRLFYVDFAGSRPTGSELATTKTIQDESSTNPDHVGGYKLAAATFSGIEHKFGLFLPKFETSK.

Positions 1–345 (MSFDHLLTSS…CLKDIQAIDP (345 aa)) are N-terminal domain. 4 EF-hand domains span residues 93-121 (YNKETVRLLASAADTTKDGDISFEEFCAF), 127-162 (SPDALYLTAFELFDRNASDTISCDEFEAVIRHTQPL), 165-195 (QDFDFSSEFIKRYFGADKQRNVNYHSFCQLL), and 198-233 (FYEEQGIQAFKRYDKNGNGTISSLDFQQIMTTVKGH). Aspartate 106, threonine 108, aspartate 110, glutamate 117, aspartate 140, asparagine 142, serine 144, threonine 146, and glutamate 151 together coordinate Ca(2+). Ca(2+)-binding residues include aspartate 211, asparagine 213, asparagine 215, threonine 217, and aspartate 222. The tract at residues 346 to 362 (ERLKRVSQMDRLINIKA) is linker loop domain. The tract at residues 372–664 (GTAFLESAYR…RLFYVDFAGS (293 aa)) is carrier domain. Solcar repeat units lie at residues 376 to 468 (LESA…MRDK), 475 to 560 (IPLY…AKLA), and 568 to 656 (NSPG…LQRL). 6 helical membrane passes run 382-399 (FLLGSVAGACGATAVYPI), 443-462 (GLLPQIVGVAPEKAIKLTMN), 485-498 (GTGGMCQVVFTNPL), 535-554 (GSRACFLRDIPFSAIYFPAY), 574-591 (FASAFIAGVPAAGLVTPA), and 631-650 (GTAARVCRSSPQFAVTLLTY). Residues 665-716 (RPTGSELATTKTIQDESSTNPDHVGGYKLAAATFSGIEHKFGLFLPKFETSK) are C-terminal domain.

Belongs to the mitochondrial carrier (TC 2.A.29) family. In terms of assembly, homodimer (via N-terminus).

It localises to the mitochondrion inner membrane. Its function is as follows. Mitochondrial and calcium-binding carrier that catalyzes the calcium-dependent exchange of cytoplasmic glutamate with mitochondrial aspartate across the mitochondrial inner membrane. This chain is Probable calcium-binding mitochondrial carrier K02F3.2, found in Caenorhabditis elegans.